A 226-amino-acid chain; its full sequence is Regulator of microtubule dynamics protein 1 (226 aa).

The protein belongs to the FAM82/RMD family. As to quaternary structure, interacts with air-2.

Its subcellular location is the cytoplasm. The protein localises to the cytoskeleton. The protein resides in the spindle pole. Acts in chromosome segregation and organization during mitosis. This Caenorhabditis elegans protein is Regulator of microtubule dynamics protein 1 (rmd-1).